Reading from the N-terminus, the 448-residue chain is Ribonuclease J (448 aa).

Zn(2+) is bound by residues His-81, His-83, Asp-85, His-86, His-151, and Asp-173. Position 383–387 (383–387 (HVSGH)) interacts with substrate. Residue His-409 coordinates Zn(2+).

This sequence belongs to the metallo-beta-lactamase superfamily. RNA-metabolizing metallo-beta-lactamase-like family. Archaeal RNase J subfamily. Forms homodimers on heating to 60 degrees Celsius which may be the active form. Requires Zn(2+) as cofactor.

Its subcellular location is the cytoplasm. Its activity is regulated as follows. Inhibited by imidazole. Functionally, a 5'-3' exoribonuclease with a strong reference for 5'-monophosphorylated RNA and no endoribonuclease activty. Also has robust 5'-'3 nuclease activity on single-stranded DNA (exodeoxyribonuclease, exoDNase). May be involved in RNA degradation. In Methanocaldococcus jannaschii (strain ATCC 43067 / DSM 2661 / JAL-1 / JCM 10045 / NBRC 100440) (Methanococcus jannaschii), this protein is Ribonuclease J.